We begin with the raw amino-acid sequence, 152 residues long: Ribosome maturation factor RimP (152 aa).

It belongs to the RimP family.

The protein localises to the cytoplasm. In terms of biological role, required for maturation of 30S ribosomal subunits. The protein is Ribosome maturation factor RimP of Pseudomonas putida (strain GB-1).